The following is a 564-amino-acid chain: Alpha-amylase 3 (564 aa).

The N-terminal stretch at 1–21 (MFGVYFVLLFLSSALIHVANA) is a signal peptide. A disulfide bridge connects residues Cys-51 and Cys-59. The substrate site is built by Asn-56 and Trp-105. Residue Asn-143 participates in Ca(2+) binding. The cysteines at positions 172 and 188 are disulfide-linked. N-linked (GlcNAc...) asparagine glycosylation occurs at Asn-181. Position 198 (Asp-198) interacts with Ca(2+). Substrate is bound at residue Arg-227. Asp-229 serves as a coordination point for Ca(2+). Asp-229 (nucleophile) is an active-site residue. 232–233 (KM) provides a ligand contact to substrate. N-linked (GlcNAc...) asparagine glycosylation is present at Asn-235. Glu-253 contributes to the Ca(2+) binding site. Glu-253 (proton donor) is an active-site residue. Residues Cys-263 and Cys-306 are joined by a disulfide bond. N-linked (GlcNAc...) asparagine glycosylation is found at Asn-282 and Asn-305. Substrate is bound by residues Asp-322 and Arg-369. Residues Asn-438, Asn-447, and Asn-498 are each glycosylated (N-linked (GlcNAc...) asparagine). Ser-538 carries GPI-anchor amidated serine lipidation. Positions 539 to 564 (SSRLILSFKTLVFGLGVTAMLFVLFF) are cleaved as a propeptide — removed in mature form.

Belongs to the glycosyl hydrolase 13 family. Ca(2+) is required as a cofactor. N-glycosylated.

The protein localises to the cell membrane. The catalysed reaction is Endohydrolysis of (1-&gt;4)-alpha-D-glucosidic linkages in polysaccharides containing three or more (1-&gt;4)-alpha-linked D-glucose units.. In terms of biological role, has a role in cell wall biosynthesis where it is involved in maintaining cell wall strength and shape. In Schizosaccharomyces pombe (strain 972 / ATCC 24843) (Fission yeast), this protein is Alpha-amylase 3 (aah3).